The primary structure comprises 244 residues: Small ribosomal subunit protein uS3 (244 aa).

The KH type-2 domain maps to 38 to 106; sequence IRKYLNARLA…EVQINIFEVK (69 aa). Over residues 222–235 the composition is skewed to basic and acidic residues; it reads TGRRNDNAGGNRDK. A disordered region spans residues 222-244; that stretch reads TGRRNDNAGGNRDKNFKRKRANR.

Belongs to the universal ribosomal protein uS3 family. Part of the 30S ribosomal subunit. Forms a tight complex with proteins S10 and S14.

Binds the lower part of the 30S subunit head. Binds mRNA in the 70S ribosome, positioning it for translation. This Parabacteroides distasonis (strain ATCC 8503 / DSM 20701 / CIP 104284 / JCM 5825 / NCTC 11152) protein is Small ribosomal subunit protein uS3.